The primary structure comprises 382 residues: MSNATNNTLGSLLPQLEAAANSNSLYGGMVPNLRFNITMIVIWGILLTIHVVQLLMRQYWFSIAFICTGILEVLGFIGRTWSHSNVADMDAFLLNMICLTIAPVFTMGGIYYQLAKLIEVYGHRFSLLPSPMAYSFIFICSDIVSLVVQAVGGGLCGVAVTDGTSTTTGNHVFIAGLAIQVASMAIFLMLWFHFLFRIYISVRWEHINSRPISLSLLKISQTEVDYLYREKFHFLRLEPKRWVFHYFNLAMTVAVLTIFTRCCYRLAELVVGWDGYLITHEWYFIILDALMMAIATVTLTIFHPGFAFKGRSTSIPITPRHVDPETLPHTDDVEDILDTSDSKQFDIEKEEFQASMKYPISTFKQFMSKIANLFSSKKKAKL.

Topologically, residues 1–34 (MSNATNNTLGSLLPQLEAAANSNSLYGGMVPNLR) are extracellular. N-linked (GlcNAc...) asparagine glycosylation is found at Asn3 and Asn6. The helical transmembrane segment at 35-55 (FNITMIVIWGILLTIHVVQLL) threads the bilayer. Topologically, residues 56-57 (MR) are cytoplasmic. A helical membrane pass occupies residues 58 to 78 (QYWFSIAFICTGILEVLGFIG). Topologically, residues 79–90 (RTWSHSNVADMD) are extracellular. The chain crosses the membrane as a helical span at residues 91-111 (AFLLNMICLTIAPVFTMGGIY). Topologically, residues 112–135 (YQLAKLIEVYGHRFSLLPSPMAYS) are cytoplasmic. Residues 136–156 (FIFICSDIVSLVVQAVGGGLC) form a helical membrane-spanning segment. The Extracellular portion of the chain corresponds to 157–171 (GVAVTDGTSTTTGNH). A helical transmembrane segment spans residues 172 to 192 (VFIAGLAIQVASMAIFLMLWF). The Cytoplasmic portion of the chain corresponds to 193-241 (HFLFRIYISVRWEHINSRPISLSLLKISQTEVDYLYREKFHFLRLEPKR). A helical membrane pass occupies residues 242 to 262 (WVFHYFNLAMTVAVLTIFTRC). Over 263-281 (CYRLAELVVGWDGYLITHE) the chain is Extracellular. Residues 282 to 302 (WYFIILDALMMAIATVTLTIF) form a helical membrane-spanning segment. The Cytoplasmic portion of the chain corresponds to 303–382 (HPGFAFKGRS…LFSSKKKAKL (80 aa)).

Belongs to the lipid-translocating exporter (LTE) (TC 9.A.26.1) family.

The protein resides in the cell membrane. Catalyzes the ATP-dependent translocation of sphingoid long-chain bases (LCBs) from the cytoplasmic site toward the extracytoplasmic side of the membrane (flip-flop). Involved in the establishment of the functional lipid asymmetry of the plasma membrane. Regulates intracellular levels of LCBs, sphingolipid precursors that are growth inhibitory at increased levels. In Saccharomyces cerevisiae (strain AWRI1631) (Baker's yeast), this protein is Sphingoid long-chain base transporter RSB1 (RSB1).